An 864-amino-acid polypeptide reads, in one-letter code: Protein translocase subunit SecA (864 aa).

ATP-binding positions include Gln87, 105 to 109 (GEGKT), and Asp494. The segment at 809–864 (AKATELRHKEQPAELSYSGGDEDGAKTPSRRNAPKVGRNDPCPCGSGKKYKKCCGA) is disordered. The segment covering 810 to 820 (KATELRHKEQP) has biased composition (basic and acidic residues). Cys850, Cys852, Cys861, and Cys862 together coordinate Zn(2+).

This sequence belongs to the SecA family. As to quaternary structure, monomer and homodimer. Part of the essential Sec protein translocation apparatus which comprises SecA, SecYEG and auxiliary proteins SecDF-YajC and YidC. Zn(2+) serves as cofactor.

The protein localises to the cell inner membrane. The protein resides in the cytoplasm. It catalyses the reaction ATP + H2O + cellular proteinSide 1 = ADP + phosphate + cellular proteinSide 2.. Part of the Sec protein translocase complex. Interacts with the SecYEG preprotein conducting channel. Has a central role in coupling the hydrolysis of ATP to the transfer of proteins into and across the cell membrane, serving as an ATP-driven molecular motor driving the stepwise translocation of polypeptide chains across the membrane. The protein is Protein translocase subunit SecA of Oleidesulfovibrio alaskensis (strain ATCC BAA-1058 / DSM 17464 / G20) (Desulfovibrio alaskensis).